The sequence spans 257 residues: Nopaline permease ATP-binding protein P (257 aa).

Residues 8–253 (LVAEDVHKNF…PTSPRCRAFL (246 aa)) form the ABC transporter domain. 40-47 (GSSGSGKS) serves as a coordination point for ATP.

This sequence belongs to the ABC transporter superfamily.

The protein resides in the cell inner membrane. Component of the nopaline active transport system probably consisting of four subunits: Q, M, P and T. This system is also capable of transporting octopine provided that catabolic functions are induced with nopaline. This Agrobacterium fabrum (strain C58 / ATCC 33970) (Agrobacterium tumefaciens (strain C58)) protein is Nopaline permease ATP-binding protein P (nocP).